Here is a 227-residue protein sequence, read N- to C-terminus: Chalcone--flavanone isomerase (227 aa).

Thr-50, Asn-115, and Ser-192 together coordinate substrate.

Belongs to the chalcone isomerase family. In terms of tissue distribution, fibers.

It carries out the reaction a chalcone = a flavanone.. Its pathway is secondary metabolite biosynthesis; flavonoid biosynthesis. Catalyzes the intramolecular cyclization of bicyclic chalcones into tricyclic (S)-flavanones. Responsible for the isomerization of 4,2',4',6'-tetrahydroxychalcone (also termed chalcone) into naringenin. The protein is Chalcone--flavanone isomerase (CHI) of Gossypium hirsutum (Upland cotton).